Reading from the N-terminus, the 234-residue chain is MIKAISIDIDGTITYPNRRLQENAVEAIRLAENLGIPVMLVTGNSACFAYAATILIGTTGPFIAEDGGVIGDKSNNRIFLGDMGDSMILWSELKKRYPNAEMSDTMKYGERRAGLVIKRTVPVEVVRGIIEELNLDLIAVDSGYAIHVKQPHVNKGEGIRNACQKLGITPEQVAHIGDGENDLDAFKVVGYRVAVAQAPEVLKREADHVTTKPYGDGGAEGIIHILKKFGYLEI.

The active-site Nucleophile is Asp-8. The Mg(2+) site is built by Asp-8 and Asp-10. Residue Lys-155 participates in substrate binding. 2 residues coordinate Mg(2+): Asp-178 and Asp-182.

Belongs to the archaeal SPP-like hydrolase family. It depends on Mg(2+) as a cofactor.

It catalyses the reaction 2-phosphoglycolate + H2O = glycolate + phosphate. Functionally, catalyzes the dephosphorylation of 2-phosphoglycolate. The chain is Phosphoglycolate phosphatase from Thermococcus sibiricus (strain DSM 12597 / MM 739).